Reading from the N-terminus, the 336-residue chain is Homeobox-leucine zipper protein HAT14 (336 aa).

Disordered regions lie at residues 53–141 and 160–194; these read RSLS…PDSV and SNKR…KLRL. Basic and acidic residues predominate over residues 64–81; sequence EDEKKKPAPRAKKSDEFR. Over residues 120–129 the composition is skewed to acidic residues; sequence VEEEEEEEEA. The span at 130-141 shows a compositional bias: low complexity; it reads VPSMSVSPPDSV. Over residues 160–173 the composition is skewed to basic and acidic residues; the sequence is SNKRDIDDEVERSA. Positions 187–246 form a DNA-binding region, homeobox; that stretch reads STRKKLRLSKDQSAFLEDSFKEHSTLNPKQKIALAKQLNLRPRQVEVWFQNRRARTKLKQ. The interval 254-275 is leucine-zipper; that stretch reads LKRCCESLTEENRRLQKEVKEL.

This sequence belongs to the HD-ZIP homeobox family. Class II subfamily.

Its subcellular location is the nucleus. Probable transcription factor. This Arabidopsis thaliana (Mouse-ear cress) protein is Homeobox-leucine zipper protein HAT14 (HAT14).